We begin with the raw amino-acid sequence, 117 residues long: Immunoglobulin heavy variable 1-69 (117 aa).

The N-terminal stretch at 1 to 19 is a signal peptide; that stretch reads MDWTWRFLFVVAAATGVQS. Gln-20 carries the post-translational modification Pyrrolidone carboxylic acid. Residues 20–44 are framework-1; sequence QVQLVQSGAEVKKPGSSVKVSCKAS. The Ig-like domain maps to 20–117; that stretch reads QVQLVQSGAE…EDTAVYYCAR (98 aa). Cys-41 and Cys-115 are oxidised to a cystine. A complementarity-determining-1 region spans residues 45–52; it reads GGTFSSYA. The segment at 53 to 69 is framework-2; that stretch reads ISWVRQAPGQGLEWMGG. Residues 70 to 77 form a complementarity-determining-2 region; it reads IIPIFGTA. The segment at 78–115 is framework-3; that stretch reads NYAQKFQGRVTITADKSTSTAYMELSSLRSEDTAVYYC. The segment at 116–117 is complementarity-determining-3; the sequence is AR.

In terms of assembly, immunoglobulins are composed of two identical heavy chains and two identical light chains; disulfide-linked.

It is found in the secreted. The protein localises to the cell membrane. V region of the variable domain of immunoglobulin heavy chains that participates in the antigen recognition. Immunoglobulins, also known as antibodies, are membrane-bound or secreted glycoproteins produced by B lymphocytes. In the recognition phase of humoral immunity, the membrane-bound immunoglobulins serve as receptors which, upon binding of a specific antigen, trigger the clonal expansion and differentiation of B lymphocytes into immunoglobulins-secreting plasma cells. Secreted immunoglobulins mediate the effector phase of humoral immunity, which results in the elimination of bound antigens. The antigen binding site is formed by the variable domain of one heavy chain, together with that of its associated light chain. Thus, each immunoglobulin has two antigen binding sites with remarkable affinity for a particular antigen. The variable domains are assembled by a process called V-(D)-J rearrangement and can then be subjected to somatic hypermutations which, after exposure to antigen and selection, allow affinity maturation for a particular antigen. This chain is Immunoglobulin heavy variable 1-69, found in Homo sapiens (Human).